Here is a 91-residue protein sequence, read N- to C-terminus: UPF0223 protein SACOL1106 (91 aa).

It belongs to the UPF0223 family.

This is UPF0223 protein SACOL1106 from Staphylococcus aureus (strain COL).